The sequence spans 231 residues: Urease accessory protein UreF (231 aa).

The protein belongs to the UreF family. As to quaternary structure, ureD, UreF and UreG form a complex that acts as a GTP-hydrolysis-dependent molecular chaperone, activating the urease apoprotein by helping to assemble the nickel containing metallocenter of UreC. The UreE protein probably delivers the nickel.

The protein localises to the cytoplasm. In terms of biological role, required for maturation of urease via the functional incorporation of the urease nickel metallocenter. The sequence is that of Urease accessory protein UreF from Marinobacter nauticus (strain ATCC 700491 / DSM 11845 / VT8) (Marinobacter aquaeolei).